A 190-amino-acid polypeptide reads, in one-letter code: Dynein axonemal light chain 1 (190 aa).

A2 bears the N-acetylalanine mark. LRR repeat units lie at residues 47–69, 70–93, 95–114, and 115–138; these read LANCEKLSLSTNCIEKIANLNGL, KNLRILSLGRNNIKNLNGLEAVGD, LEELWISYNFIEKLKGIHVM, and RKLKILYISNNLVKDWAEFVKLAE. S56 carries the post-translational modification Phosphoserine.

Belongs to the dynein light chain LC1-type family. In terms of assembly, interacts with ZMYND10 (via C-terminus). Interacts with DNAH5, a outer arm dynein heavy chain. Interacts with tubulin located within the A-tubule of the outer doublets in a ATP-independent manner.

It is found in the cytoplasm. The protein resides in the cytoskeleton. The protein localises to the cilium axoneme. In terms of biological role, part of the multisubunit axonemal ATPase complexes that generate the force for cilia motility and govern beat frequency. Component of the outer arm dynein (ODA). May be involved in a mechanosensory feedback mechanism controlling ODA activity based on external conformational cues by tethering the outer arm dynein heavy chain (DNAH5) to the microtubule within the axoneme. Important for ciliary function in the airways and for the function of the cilia that produce the nodal flow essential for the determination of the left-right asymmetry. In Rattus norvegicus (Rat), this protein is Dynein axonemal light chain 1.